We begin with the raw amino-acid sequence, 170 residues long: Adenine phosphoribosyltransferase (170 aa).

Belongs to the purine/pyrimidine phosphoribosyltransferase family. As to quaternary structure, homodimer.

The protein localises to the cytoplasm. It carries out the reaction AMP + diphosphate = 5-phospho-alpha-D-ribose 1-diphosphate + adenine. It functions in the pathway purine metabolism; AMP biosynthesis via salvage pathway; AMP from adenine: step 1/1. Its function is as follows. Catalyzes a salvage reaction resulting in the formation of AMP, that is energically less costly than de novo synthesis. The sequence is that of Adenine phosphoribosyltransferase from Mesoplasma florum (strain ATCC 33453 / NBRC 100688 / NCTC 11704 / L1) (Acholeplasma florum).